Consider the following 917-residue polypeptide: Intercellular adhesion molecule 5 (917 aa).

A signal peptide spans 1–31 (MPGPSPGLRRALLGLWAALGLGILGISAVAL). The Extracellular portion of the chain corresponds to 32-833 (EPFWADLQPR…RITVRVAGPW (802 aa)). Ig-like C2-type domains follow at residues 48 to 130 (GGSL…PLPS), 135 to 235 (GENF…SLIA), 242 to 329 (DSER…LLTL), 337 to 402 (GKMV…SSEL), 408 to 486 (PRLD…VTLT), 491 to 567 (PALD…VAVT), 572 to 651 (PSFE…NRHG), 665 to 738 (PQMD…RTVT), and 745 to 828 (PVVA…ITVR). Residue asparagine 54 is glycosylated (N-linked (GlcNAc...) (high mannose) asparagine). Intrachain disulfides connect cysteine 55/cysteine 99 and cysteine 59/cysteine 103. 2 N-linked (GlcNAc...) asparagine glycosylation sites follow: asparagine 74 and asparagine 137. A disulfide bridge connects residues cysteine 142 and cysteine 198. Residue threonine 182 is modified to Phosphothreonine. 6 N-linked (GlcNAc...) asparagine glycosylation sites follow: asparagine 195, asparagine 214, asparagine 274, asparagine 316, asparagine 371, and asparagine 397. Cysteines 249 and 302 form a disulfide. Cysteine 344 and cysteine 383 are disulfide-bonded. Disulfide bonds link cysteine 415–cysteine 470, cysteine 498–cysteine 551, and cysteine 579–cysteine 644. Residues asparagine 582 and asparagine 645 are each glycosylated (N-linked (GlcNAc...) asparagine). Cysteine 672 and cysteine 724 are joined by a disulfide. Asparagine 762, asparagine 793, and asparagine 794 each carry an N-linked (GlcNAc...) asparagine glycan. Cysteine 767 and cysteine 812 form a disulfide bridge. Residues 834 to 854 (LWVAVGGAAGGAALLAAGAGL) form a helical membrane-spanning segment. Over 855 to 917 (AFYVQSTACK…EVFAIQLTSS (63 aa)) the chain is Cytoplasmic. Residues 884 to 893 (GAGGTPGAEG) are compositionally biased toward gly residues. Positions 884–908 (GAGGTPGAEGGAETPGTAESPADGE) are disordered.

It belongs to the immunoglobulin superfamily. ICAM family. In terms of processing, glycosylation at Asn-54 is critical for functional folding. As to expression, expressed on neurons in the most rostral segment of the mammalian brain, the telencephalon.

The protein localises to the membrane. In terms of biological role, ICAM proteins are ligands for the leukocyte adhesion protein LFA-1 (integrin alpha-L/beta-2). The chain is Intercellular adhesion molecule 5 (Icam5) from Mus musculus (Mouse).